The sequence spans 104 residues: Small ribosomal subunit protein uS10 (104 aa).

This sequence belongs to the universal ribosomal protein uS10 family. In terms of assembly, part of the 30S ribosomal subunit.

Involved in the binding of tRNA to the ribosomes. The chain is Small ribosomal subunit protein uS10 from Helicobacter pylori (strain J99 / ATCC 700824) (Campylobacter pylori J99).